Here is a 444-residue protein sequence, read N- to C-terminus: Gustatory receptor 5a for trehalose (444 aa).

Topologically, residues 1–56 are cytoplasmic; sequence MRQLKGRNRCNRAVRHLKIQGKMWLKNLKSGLEQIRESQVRGTRKNFLHDGSFHEA. Residues 57–77 traverse the membrane as a helical segment; that stretch reads VAPVLAVAQCFCLMPVCGISA. Topologically, residues 78 to 178 are extracellular; the sequence is PTYRGLSFNR…RARPARRLKL (101 aa). Residues 179-199 form a helical membrane-spanning segment; that stretch reads VAFVLLVVSLMEHLLSIISVV. The Cytoplasmic portion of the chain corresponds to 200–214; that stretch reads YYDFCPRRSDPVESY. The chain crosses the membrane as a helical span at residues 215-235; it reads LLGASAQLFEVFPYSNWLAWL. The Extracellular portion of the chain corresponds to 236–240; that stretch reads GKIQN. A helical transmembrane segment spans residues 241–261; the sequence is VLLTFGWSYMDIFLMMLGMGL. Residues 262-305 lie on the Cytoplasmic side of the membrane; it reads SEMLARLNRSLEQQVRQPMPEAYWTWSRTLYRSIVELIREVDDA. A helical membrane pass occupies residues 306 to 326; that stretch reads VSGIMLISFGSNLYFICLQLL. Residues 327–338 are Extracellular-facing; it reads KSINTMPSSAHA. The chain crosses the membrane as a helical span at residues 339-359; sequence VYFYFSLLFLLSRSTAVLLFV. Residues 360 to 410 are Cytoplasmic-facing; the sequence is SAINDQAREPLRLLRLVPLKGYHPEVFRFAAELASDQVALTGLKFFNVTRK. Residues 411-431 traverse the membrane as a helical segment; sequence LFLAMAGTVATYELVLIQFHE. Residues 432–444 are Extracellular-facing; that stretch reads DKKTWDCSPFNLD.

The protein belongs to the insect chemoreceptor superfamily. Gustatory receptor (GR) family. Gr5a subfamily. Expressed in labellar chemosensory neurons.

Its subcellular location is the cell membrane. Its function is as follows. Gustatory receptor required for response to the sugar trehalose in taste neurons. Gr5a neurons selectively respond to sugars, in contrast to Gr66a cells which respond to bitter compounds. Flies are attracted to sugars and avoid bitter substances, suggesting that Gr5a neuron activity is sufficient to mediate acceptance behavior. Sugar signal transduction occurs through coupling with G-proteins such as Galpha49B and G-salpha60A. This Drosophila melanogaster (Fruit fly) protein is Gustatory receptor 5a for trehalose (Gr5a).